We begin with the raw amino-acid sequence, 190 residues long: MSTDTALVIGLGNPGPQYEKTRHNVGFMVAGTLAGRMGGKFNVHKKSGAEIVEGRLAGRRVILGKPRSYMNLSGGAVAGLARFFSVDAANIIVVHDELDLDFGTIRLKLGGGEGGHNGLRSISSSLTTKDYLRTRVGIGRPPGRMDPADYVLKPFSSTERKELDLVCEEAADAVELLLELGLEAAQNRLH.

A tRNA-binding site is contributed by Y18. H23 functions as the Proton acceptor in the catalytic mechanism. 3 residues coordinate tRNA: Y69, N71, and N117.

The protein belongs to the PTH family. In terms of assembly, monomer.

It localises to the cytoplasm. It catalyses the reaction an N-acyl-L-alpha-aminoacyl-tRNA + H2O = an N-acyl-L-amino acid + a tRNA + H(+). Functionally, hydrolyzes ribosome-free peptidyl-tRNAs (with 1 or more amino acids incorporated), which drop off the ribosome during protein synthesis, or as a result of ribosome stalling. Its function is as follows. Catalyzes the release of premature peptidyl moieties from peptidyl-tRNA molecules trapped in stalled 50S ribosomal subunits, and thus maintains levels of free tRNAs and 50S ribosomes. This Rhodococcus erythropolis (strain PR4 / NBRC 100887) protein is Peptidyl-tRNA hydrolase.